Reading from the N-terminus, the 414-residue chain is MKNSILEELKWRGLIKQITNESKILDAQNNNDAVYCGFDPTADSLHVGHLMMIITLKRFADYNFKPIALIGGATGMIGDPSFKANERVLQTKDQVEHNINKISAQLKQIIPNVNFVNNNTWLSNISLIDFLRDIGKHFNLSYLLAKESIATRIQTGLSVTEFCYTMLQAYDFYYLYKNNNCSIQIGGSDQWGNITSGIDFISDTINKNNKAAGLTINLLTKSDGQKFGKTESGTIWLDKTKTSEYEFYQFWFNQTDQDSINLLKCLTFLTKEQIDNLIKEHQNQSSKHLLQKALASEMTKFVHQQQGLDKALKLTEAFFSGDLFSLTNDLFKMALNSLPNTQINKDTKVIDALIEVKAASSKREAREFLTNKAIMINNQIIEDENTLISSFDLIQNKYLLVKKGKKKYFVILIK.

Position 35 (Y35) interacts with L-tyrosine. The short motif at 40–49 (PTADSLHVGH) is the 'HIGH' region element. L-tyrosine-binding residues include Y164 and Q168. The 'KMSKS' region motif lies at 226–230 (KFGKT). Residue K229 coordinates ATP. The region spanning 347–414 (TKVIDALIEV…KKKYFVILIK (68 aa)) is the S4 RNA-binding domain.

It belongs to the class-I aminoacyl-tRNA synthetase family. TyrS type 1 subfamily. Homodimer.

The protein resides in the cytoplasm. The enzyme catalyses tRNA(Tyr) + L-tyrosine + ATP = L-tyrosyl-tRNA(Tyr) + AMP + diphosphate + H(+). Its function is as follows. Catalyzes the attachment of tyrosine to tRNA(Tyr) in a two-step reaction: tyrosine is first activated by ATP to form Tyr-AMP and then transferred to the acceptor end of tRNA(Tyr). The protein is Tyrosine--tRNA ligase of Mycoplasma mycoides subsp. mycoides SC (strain CCUG 32753 / NCTC 10114 / PG1).